Here is a 225-residue protein sequence, read N- to C-terminus: Membrane protein (225 aa).

Residues 1–20 are Virion surface-facing; that stretch reads MSNETNCTLDFEQSVELFKE. A helical transmembrane segment spans residues 21-41; the sequence is YNLFITAFLLFLTIILQYGYA. Topologically, residues 42–51 are intravirion; sequence TRIRFIYILK. Residues 52–72 traverse the membrane as a helical segment; that stretch reads MIVLWCFWPLNIAVGVISCIY. Residues 73-77 lie on the Virion surface side of the membrane; the sequence is PPNTG. The helical transmembrane segment at 78 to 98 threads the bilayer; it reads GLVAAIILTVFACLSFVGYWI. The Intravirion portion of the chain corresponds to 99 to 225; the sequence is QSCRLFKRCR…VATGGSSLYT (127 aa).

The protein belongs to the gammacoronaviruses M protein family. In terms of assembly, homomultimer. Interacts with envelope E protein in the budding compartment of the host cell, which is located between endoplasmic reticulum and the Golgi complex. Forms a complex with HE and S proteins. Interacts with nucleocapsid N protein. This interaction probably participates in RNA packaging into the virus.

Its subcellular location is the virion membrane. The protein resides in the host Golgi apparatus membrane. In terms of biological role, component of the viral envelope that plays a central role in virus morphogenesis and assembly via its interactions with other viral proteins. This chain is Membrane protein, found in Avian infectious bronchitis virus (strain KB8523) (IBV).